The following is a 192-amino-acid chain: Probable GTP-binding protein EngB (192 aa).

Residues Gln22 to Gly192 form the EngB-type G domain. GTP contacts are provided by residues Gly30–Ser37, Gly57–Leu61, Asp75–Gly78, Thr142–Asp145, and Tyr172–Ala174. Mg(2+) is bound by residues Ser37 and Thr59.

It belongs to the TRAFAC class TrmE-Era-EngA-EngB-Septin-like GTPase superfamily. EngB GTPase family. It depends on Mg(2+) as a cofactor.

Necessary for normal cell division and for the maintenance of normal septation. The protein is Probable GTP-binding protein EngB of Chlorobium phaeobacteroides (strain BS1).